We begin with the raw amino-acid sequence, 283 residues long: NFU1 iron-sulfur cluster scaffold homolog, mitochondrial (283 aa).

A mitochondrion-targeting transit peptide spans 1–65 (MSKFLSQAAI…ELRMPVACRR (65 aa)). The nifU stretch occupies residues 182 to 250 (IKELLDTRIR…IPEVESVEQV (69 aa)). Cysteine 219 and cysteine 222 together coordinate [4Fe-4S] cluster.

It belongs to the NifU family.

It localises to the mitochondrion. In terms of biological role, molecular scaffold for [Fe-S] cluster assembly of mitochondrial iron-sulfur proteins. The sequence is that of NFU1 iron-sulfur cluster scaffold homolog, mitochondrial from Drosophila sechellia (Fruit fly).